Reading from the N-terminus, the 412-residue chain is Homoserine dehydrogenase (412 aa).

Residues 9–16 (LGIGTVGG) and Lys105 each bind NADP(+). Residue Glu190 participates in substrate binding. Lys205 functions as the Proton donor in the catalytic mechanism. One can recognise an ACT domain in the interval 330–407 (YLRLRAVDKP…ISGKVTRLRM (78 aa)).

Belongs to the homoserine dehydrogenase family.

The catalysed reaction is L-homoserine + NADP(+) = L-aspartate 4-semialdehyde + NADPH + H(+). It catalyses the reaction L-homoserine + NAD(+) = L-aspartate 4-semialdehyde + NADH + H(+). The protein operates within amino-acid biosynthesis; L-methionine biosynthesis via de novo pathway; L-homoserine from L-aspartate: step 3/3. It participates in amino-acid biosynthesis; L-threonine biosynthesis; L-threonine from L-aspartate: step 3/5. The protein is Homoserine dehydrogenase (hom) of Methylobacillus glycogenes.